A 108-amino-acid chain; its full sequence is uncharacterized protein (108 aa).

The chain crosses the membrane as a helical span at residues 15 to 37 (SYYFYIFWNFFLPMFIVYRGFGL).

Its subcellular location is the membrane. This is an uncharacterized protein from Archaeoglobus fulgidus (strain ATCC 49558 / DSM 4304 / JCM 9628 / NBRC 100126 / VC-16).